A 488-amino-acid chain; its full sequence is Glutamyl-tRNA(Gln) amidotransferase subunit B, mitochondrial (488 aa).

The protein belongs to the GatB/GatE family. GatB subfamily. In terms of assembly, subunit of the heterotrimeric GatFAB amidotransferase (AdT) complex, composed of A, B and F subunits.

The protein resides in the mitochondrion. It carries out the reaction L-glutamyl-tRNA(Gln) + L-glutamine + ATP + H2O = L-glutaminyl-tRNA(Gln) + L-glutamate + ADP + phosphate + H(+). Allows the formation of correctly charged Gln-tRNA(Gln) through the transamidation of misacylated Glu-tRNA(Gln) in the mitochondria. The reaction takes place in the presence of glutamine and ATP through an activated gamma-phospho-Glu-tRNA(Gln). The protein is Glutamyl-tRNA(Gln) amidotransferase subunit B, mitochondrial of Candida albicans (strain WO-1) (Yeast).